The primary structure comprises 248 residues: Probable transcriptional regulatory protein NGR_c27950 (248 aa).

It belongs to the TACO1 family.

Its subcellular location is the cytoplasm. The polypeptide is Probable transcriptional regulatory protein NGR_c27950 (Sinorhizobium fredii (strain NBRC 101917 / NGR234)).